Consider the following 392-residue polypeptide: Digeranylgeranylglycerophospholipid reductase (392 aa).

FAD is bound by residues Gly15, Glu34, Cys45, Ala46, Gly48, Arg99, Ala123, Asp279, Gly291, and Ile292. Val370 provides a ligand contact to a 2,3-bis-O-(geranylgeranyl)-sn-glycerol 1-phospholipid.

This sequence belongs to the geranylgeranyl reductase family. DGGGPL reductase subfamily. FAD is required as a cofactor.

It catalyses the reaction a 2,3-bis-O-phytanyl-sn-glycerol 1-phospholipid + 8 oxidized 2[4Fe-4S]-[ferredoxin] = a 2,3-bis-O-(geranylgeranyl)-sn-glycerol 1-phospholipid + 8 reduced 2[4Fe-4S]-[ferredoxin] + 16 H(+). The enzyme catalyses 2,3-bis-O-(phytanyl)-sn-glycerol 1-phosphate + 8 oxidized 2[4Fe-4S]-[ferredoxin] = 2,3-bis-O-(geranylgeranyl)-sn-glycerol 1-phosphate + 8 reduced 2[4Fe-4S]-[ferredoxin] + 16 H(+). The catalysed reaction is a 2,3-bis-O-phytanyl-sn-glycerol 1-phospholipid + 8 A = a 2,3-bis-O-(geranylgeranyl)-sn-glycerol 1-phospholipid + 8 AH2. It carries out the reaction CDP-2,3-bis-O-(geranylgeranyl)-sn-glycerol + 8 AH2 = CDP-2,3-bis-O-(phytanyl)-sn-glycerol + 8 A. It catalyses the reaction archaetidylserine + 8 AH2 = 2,3-bis-O-phytanyl-sn-glycero-3-phospho-L-serine + 8 A. It functions in the pathway membrane lipid metabolism; glycerophospholipid metabolism. Is involved in the reduction of 2,3-digeranylgeranylglycerophospholipids (unsaturated archaeols) into 2,3-diphytanylglycerophospholipids (saturated archaeols) in the biosynthesis of archaeal membrane lipids. Catalyzes the formation of archaetidic acid (2,3-di-O-phytanyl-sn-glyceryl phosphate) from 2,3-di-O-geranylgeranylglyceryl phosphate (DGGGP) via the hydrogenation of each double bond of the isoprenoid chains. Is also probably able to reduce double bonds of geranyl groups in CDP-2,3-bis-O-(geranylgeranyl)-sn-glycerol and archaetidylserine, thus acting at various stages in the biosynthesis of archaeal membrane lipids. This Methanocella arvoryzae (strain DSM 22066 / NBRC 105507 / MRE50) protein is Digeranylgeranylglycerophospholipid reductase.